Here is a 309-residue protein sequence, read N- to C-terminus: High-affinity zinc uptake system protein AztC (309 aa).

An N-terminal signal peptide occupies residues 1–24 (MKDWLFRIATCSIMTFSSLAAAQA). H61 is a Zn(2+) binding site. The segment at 117–132 (GGGHYHYIDGKAVFHA) is D-loop. H138 provides a ligand contact to Zn(2+). A disulfide bridge links C158 with C165. H204 contacts Zn(2+). Residues 222–229 (QGVSTESE) form a Z-loop region. D279 is a Zn(2+) binding site.

Belongs to the bacterial solute-binding protein 9 family. Monomer.

Its subcellular location is the periplasm. Part of the ATP-binding cassette (ABC) transport system AztABCD involved in zinc import. Binds zinc with high affinity and specificity and delivers it to the membrane permease for translocation into the cytoplasm. In Paracoccus denitrificans (strain Pd 1222), this protein is High-affinity zinc uptake system protein AztC.